The chain runs to 515 residues: MLLWASLLAFAPVCGQSAAAHKPVISVHPPWTTFFKGERVTLTCNGFQFYATEKTTWYHRHYWGEKLTLTPGNTLEVRESGLYRCQARGSPRSNPVRLLFSSDSLILQAPYSVFEGDTLVLRCHRRRKEKLTAVKYTWNGNILSISNKSWDLLIPQASSNNNGNYRCIGYGDENDVFRSNFKIIKIQELFPHPELKATDSQPTEGNSVNLSCETQLPPERSDTPLHFNFFRDGEVILSDWSTYPELQLPTVWRENSGSYWCGAETVRGNIHKHSPSLQIHVQRIPVSGVLLETQPSGGQAVEGEMLVLVCSVAEGTGDTTFSWHREDMQESLGRKTQRSLRAELELPAIRQSHAGGYYCTADNSYGPVQSMVLNVTVRETPGNRDGLVAAGATGGLLSALLLAVALLFHCWRRRKSGVGFLGDETRLPPAPGPGESSHSICPAQVELQSLYVDVHPKKGDLVYSEIQTTQLGEEEEANTSRTLLEDKDVSVVYSEVKTQHPDNSAGKISSKDEES.

Residues 1-19 (MLLWASLLAFAPVCGQSAA) form the signal peptide. Residues 20–387 (AHKPVISVHP…RETPGNRDGL (368 aa)) lie on the Extracellular side of the membrane. Ig-like C2-type domains are found at residues 23-97 (PVIS…NPVR), 102-183 (SDSL…NFKI), 193-271 (PELK…GNIH), and 275-374 (PSLQ…MVLN). 4 disulfide bridges follow: C44–C85, C123–C167, C212–C261, and C310–C359. N-linked (GlcNAc...) asparagine glycosylation is present at N374. A helical membrane pass occupies residues 388 to 408 (VAAGATGGLLSALLLAVALLF). At 409–515 (HCWRRRKSGV…GKISSKDEES (107 aa)) the chain is on the cytoplasmic side. Short sequence motifs (ITIM motif) lie at residues 449-454 (SLYVDV), 461-466 (LVYSEI), and 491-496 (VVYSEV). Residues 494-515 (SEVKTQHPDNSAGKISSKDEES) are disordered.

Interacts with PTPN6 and PTPN11. In terms of processing, phosphorylated on cytoplasmic tyrosines upon activation. Specifically expressed by memory and monocytoid B-cells which populate spleen and lymph nodes. Preferentially expressed in memory B-cells associated with mucosal tissue (at protein level).

It is found in the cell membrane. In terms of biological role, may function as an inhibitor of the B-cell receptor signaling. May function in the B-cell-mediated immune response. The chain is Fc receptor-like protein 4 (FCRL4) from Homo sapiens (Human).